A 500-amino-acid chain; its full sequence is MEADGQKYSVLAKTQVREKMMKEIEQISEVFLVSKSDATVILIRLGWNSFKASDLLGDNKEKFLAKLGLARVLNSNSSSADRETGDGDYLVSTPFCSHKFSTTCWSEYLSDALKKNKEQRGLISCLSQDCVASVGPDTIEQLTEPVKEMYENYILESFMECHKATIKWCPASGCEYAVELQEDGNEDNVISVVCLCGHTFCWTCGLESHRPVSCKKASIWWTYLLDQSRSISWIHTNTKSCPKCKIPVQQNGDPNYRLINCICSNNFCWICLRTEEQHQGNWNCSPVAVPAAGPSTVEFSQILHLNLWEAGHEALKKAKSKLRALEEKIIPKLIENCGATELDIRTVREAGMLSVQCRQVLKWSCVFDYSIIEYESTKKQYLKHLRALASTMLCMHEGKLDELIHLALSPEDFTNYKHKLEISTTCTGNHFDGFIKELEDGKPEVKADGYENEPGSRWFCDRCTFENSWVDKQCKMCFFPLDYHPSPQVAAAPEDLGKSE.

Residues 74–288 form a TRIAD supradomain region; the sequence is NSNSSSADRE…QGNWNCSPVA (215 aa). The RING-type 1 zinc finger occupies 78 to 130; the sequence is SSADRETGDGDYLVSTPFCSHKFSTTCWSEYLSDALKKNKEQRGLISCLSQDC. 20 residues coordinate Zn(2+): C96, H98, C125, C130, C169, C174, C194, C196, C201, C204, H209, C214, C241, C244, C261, C263, C268, C271, H278, and C284. Residues 148 to 214 form an IBR-type zinc finger; the sequence is EMYENYILES…GLESHRPVSC (67 aa). An RING-type 2; atypical zinc finger spans residues 241 to 271; that stretch reads CPKCKIPVQQNGDPNYRLINCICSNNFCWIC. The segment at 453-483 adopts a RanBP2-type zinc-finger fold; the sequence is EPGSRWFCDRCTFENSWVDKQCKMCFFPLDY.

This sequence belongs to the RBR family. Ariadne subfamily. Zn(2+) is required as a cofactor. In terms of tissue distribution, preferentially expressed in green siliques.

The enzyme catalyses [E2 ubiquitin-conjugating enzyme]-S-ubiquitinyl-L-cysteine + [acceptor protein]-L-lysine = [E2 ubiquitin-conjugating enzyme]-L-cysteine + [acceptor protein]-N(6)-ubiquitinyl-L-lysine.. It functions in the pathway protein modification; protein ubiquitination. Functionally, might act as an E3 ubiquitin-protein ligase, or as part of E3 complex, which accepts ubiquitin from specific E2 ubiquitin-conjugating enzymes and then transfers it to substrates. This chain is Probable E3 ubiquitin-protein ligase ARI16 (ARI16), found in Arabidopsis thaliana (Mouse-ear cress).